Consider the following 148-residue polypeptide: Large ribosomal subunit protein eL19 (148 aa).

Over residues 52 to 76 the composition is skewed to basic residues; it reads KPKKGISSYRSKKIAQQKKKGRRRG. A disordered region spans residues 52 to 95; sequence KPKKGISSYRSKKIAQQKKKGRRRGPGSIKGAKGARRPKKDEWM.

This sequence belongs to the eukaryotic ribosomal protein eL19 family. In terms of assembly, part of the 50S ribosomal subunit.

Functionally, binds to the 23S rRNA. The chain is Large ribosomal subunit protein eL19 from Methanothermobacter thermautotrophicus (strain ATCC 29096 / DSM 1053 / JCM 10044 / NBRC 100330 / Delta H) (Methanobacterium thermoautotrophicum).